A 130-amino-acid polypeptide reads, in one-letter code: Protein PELPK2 (130 aa).

An N-terminal signal peptide occupies residues 1 to 32; it reads MTLKKSFSASLLSPFLIICLIALLSVPVSVGA. Tandem repeats lie at residues 47–51, 52–56, 58–62, 63–67, 69–73, 74–78, 80–84, 91–95, 97–101, 102–106, 108–112, 113–117, and 121–125. The tract at residues 47 to 125 is 13 X 5 AA tandem repeat of P-[DEGQ]-[AEFLIV]-[QPT]-K; it reads PELPKPEMPK…TKVPAFTMPK (79 aa). A compositionally biased stretch (basic and acidic residues) spans 71–84; it reads IPKPEMPKLPEIQK. The disordered stretch occupies residues 71–130; that stretch reads IPKPEMPKLPEIQKPELPTFPELPKMPEFPKFDFPKLPELPKPEETKVPAFTMPKFPGSP. A compositionally biased stretch (basic and acidic residues) spans 98–117; it reads EFPKFDFPKLPELPKPEETK.

The protein resides in the secreted. Its subcellular location is the cell wall. The protein is Protein PELPK2 of Arabidopsis thaliana (Mouse-ear cress).